An 879-amino-acid chain; its full sequence is MSSSQAVRSSKYSYRATSTGPGTADVNIEYIQDLSSLSRLEDKIRLLQDDLEVERELRQRIEREKADLSVQVIQMSERLEEAEGGAEHQFEANRKRDAELLKLRKLLEDVHLESEETTLLLKKKHNEIITDFQEQVEILTKNKARAEKDKAKFQTEVYELLSQIESYNKEKIVSEKHISKLEVSISELNVKIEELNRTVIDISSHRSRLSQENIELTKDVQDLKVQLDTVSFSKSQVISQLEDARRRLEDEDRRRSLLESSLHQVEIELDSVRNQLEEESEARIDLERQLVKANADATSWQNKWNSEVAARAEEVEEIRRKYQVRITELEEHIESLIVKVNNLEKMKTRLASEVEVLIIDLEKSNNSCRELTKSVNTLEKHNVELKSRLDETIILYETSQRDLKNKHADLVRTVHELDKVKDNNNQLTRENKKLGDDLHEAKGAINELNRRLHELELELRRLENERDELTAAYKEAEAGRKAEEQRGQRLAADFNQYRHDAERRLAEKDEEIEAIRKQTSIEIEQLNARVIEAETRLKTEVTRIKKKLQIQITELEMSLDVANKTNIDLQKVIKKQSLQLTELQAHYEDVQRQLQATLDQYAVAQRRLAGLNGELEEVRSHLDSANRAKRTVELQYEEAASRINELTTANVSLVSIKSKLEQELSVVASDYEEVSKELRISDERYQKVQVELKHVVEQVHEEQERIVKLETIKKSLEVEVKNLSIRLEEVELNAVAGSKRIISKLEARIRDLELELEEEKRRHAETIKILRKKERTVKEVLVQCEEDQKNLILLQDALDKSTAKINIYRRQLSEQEGVSQQTTTRVRRFQRELEAAEDRADTAESSLNIIRAKHRTFVTTSTVPGSQVYIQETTRTITE.

The segment at M1–I31 is nonhelical region. Residue S18 is modified to Phosphoserine. Residues Q32–V858 adopt a coiled-coil conformation. Residues T859–E879 form a nonhelical region region.

Belongs to the paramyosin family. Heterodimer of two isoforms. In terms of processing, the more-acidic and less-abundant isoform is phosphorylated. In terms of tissue distribution, expressed in all larval and adult muscle tissues. Expression is five times higher in tubular than in fibrillar muscles.

It localises to the cytoplasm. The protein localises to the myofibril. Paramyosin is a major structural component of many thick filaments isolated from invertebrate muscles. The chain is Paramyosin, long form (Prm) from Drosophila melanogaster (Fruit fly).